Here is a 221-residue protein sequence, read N- to C-terminus: Iron-sulfur cluster repair protein YtfE (221 aa).

Belongs to the RIC family. YtfE subfamily. Homodimer.

The protein localises to the cytoplasm. Di-iron-containing protein involved in the repair of iron-sulfur clusters damaged by oxidative and nitrosative stress conditions. The chain is Iron-sulfur cluster repair protein YtfE from Edwardsiella ictaluri (strain 93-146).